The primary structure comprises 100 residues: MARKSLIQREKKRQKLEQKYHSIRRSSKKEISKVPSLSDKWEIYGKLQSLPRNSAPTRLHRRCFLTGRPRANYRDFGLSGHILREMVHACLLPGATRSSW.

The disordered stretch occupies residues M1–I31.

It belongs to the universal ribosomal protein uS14 family. In terms of assembly, part of the 30S ribosomal subunit.

It is found in the plastid. The protein localises to the chloroplast. Functionally, binds 16S rRNA, required for the assembly of 30S particles. The polypeptide is Small ribosomal subunit protein uS14c (Solanum bulbocastanum (Wild potato)).